Consider the following 1030-residue polypeptide: uncharacterized protein (1030 aa).

Over residues 1-15 the composition is skewed to polar residues; the sequence is MSENSTDSKNFQFSE. The interval 1 to 53 is disordered; that stretch reads MSENSTDSKNFQFSEGSRESSNDELKVLLRDTETKEDEKSSFSNSEEESIIEN. The segment covering 16-40 has biased composition (basic and acidic residues); it reads GSRESSNDELKVLLRDTETKEDEKS. The residue at position 41 (Ser-41) is a Phosphoserine. The 157-residue stretch at 134 to 290 folds into the Helicase ATP-binding domain; sequence IKCVERMESV…WISEIHKQPC (157 aa). 147–154 serves as a coordination point for ATP; sequence AHTSAGKT. The short motif at 238–241 is the DEVH box element; the sequence is DEVH. Residues 357–561 enclose the Helicase C-terminal domain; sequence SLERIINMVL…GMILNLMRIE (205 aa).

Belongs to the helicase family. SKI2 subfamily.

The protein localises to the nucleus. This is an uncharacterized protein from Schizosaccharomyces pombe (strain 972 / ATCC 24843) (Fission yeast).